A 562-amino-acid polypeptide reads, in one-letter code: Sulfite reductase [NADPH] hemoprotein beta-component (562 aa).

Positions 428, 434, 473, and 477 each coordinate [4Fe-4S] cluster. C477 serves as a coordination point for siroheme.

Belongs to the nitrite and sulfite reductase 4Fe-4S domain family. Alpha(8)-beta(8). The alpha component is a flavoprotein, the beta component is a hemoprotein. Siroheme is required as a cofactor. [4Fe-4S] cluster serves as cofactor.

It catalyses the reaction hydrogen sulfide + 3 NADP(+) + 3 H2O = sulfite + 3 NADPH + 4 H(+). The protein operates within sulfur metabolism; hydrogen sulfide biosynthesis; hydrogen sulfide from sulfite (NADPH route): step 1/1. Component of the sulfite reductase complex that catalyzes the 6-electron reduction of sulfite to sulfide. This is one of several activities required for the biosynthesis of L-cysteine from sulfate. The chain is Sulfite reductase [NADPH] hemoprotein beta-component from Myxococcus xanthus (strain DK1622).